The primary structure comprises 273 residues: Type III pantothenate kinase (273 aa).

5 to 12 (DVGNSHVV) provides a ligand contact to ATP. Residue 112 to 115 (GTDL) participates in substrate binding. Residue D114 is the Proton acceptor of the active site. K(+) is bound at residue D134. Residue T137 participates in ATP binding. T189 lines the substrate pocket.

Belongs to the type III pantothenate kinase family. Homodimer. It depends on NH4(+) as a cofactor. K(+) is required as a cofactor.

The protein localises to the cytoplasm. The enzyme catalyses (R)-pantothenate + ATP = (R)-4'-phosphopantothenate + ADP + H(+). The protein operates within cofactor biosynthesis; coenzyme A biosynthesis; CoA from (R)-pantothenate: step 1/5. Catalyzes the phosphorylation of pantothenate (Pan), the first step in CoA biosynthesis. The chain is Type III pantothenate kinase from Treponema pallidum subsp. pallidum (strain SS14).